Reading from the N-terminus, the 802-residue chain is DEAD-box ATP-dependent RNA helicase 28 (802 aa).

Residues 1 to 179 (MDADFRFDPD…TDKKSGVVDP (179 aa)) are disordered. Acidic residues-rich tracts occupy residues 76-131 (GDSE…EELE) and 138-169 (KSDEVEEGEEGQDGEEEEKEEGDEEAAEEEEE). 2 coiled-coil regions span residues 90-122 (DSEEDDKEVVEGEIDDEEDEVEESEDDDEGVEV) and 149-174 (QDGEEEEKEEGDEEAAEEEEETDKKS). A Q motif motif is present at residues 194 to 222 (NSFLELNLSRPLLRACEALGYQKPTPIQA). One can recognise a Helicase ATP-binding domain in the interval 225–399 (IPLALTGRDI…TLSLNKPVRL (175 aa)). 238-245 (AITGSGKT) provides a ligand contact to ATP. Positions 347–350 (DEAD) match the DEAD box motif. Residues 429–573 (VLLALCLKTF…SRIVAEKPVA (145 aa)) form the Helicase C-terminal domain. A coiled-coil region spans residues 572 to 616 (VAECAKLIEELEDQISTIIQEEREERILRKAEMEATKAENMIAHK). A disordered region spans residues 639–802 (KAAKESTSQG…KSKSRYNRRK (164 aa)). Polar residues predominate over residues 644–659 (STSQGKSNSGVISAQQ). Basic residues predominate over residues 666-684 (KEKKRREREKNLPRKKRRR). Positions 671-712 (REREKNLPRKKRRRLEAEREMLEDESEDEEEAKESKGGKKEK) form a coiled coil. Over residues 691–702 (MLEDESEDEEEA) the composition is skewed to acidic residues. The span at 776 to 802 (RSLKKNNVMRKKSKNSFKSKSRYNRRK) shows a compositional bias: basic residues.

Belongs to the DEAD box helicase family. DDX27/DRS1 subfamily.

It catalyses the reaction ATP + H2O = ADP + phosphate + H(+). The polypeptide is DEAD-box ATP-dependent RNA helicase 28 (Oryza sativa subsp. japonica (Rice)).